A 521-amino-acid polypeptide reads, in one-letter code: Envelope glycoprotein C homolog (521 aa).

The N-terminal stretch at 1 to 21 is a signal peptide; it reads MGPLGRAWLIAAIFAWALLSA. At 22–475 the chain is on the virion surface side; it reads RRGLAEEAEA…DASPGLIGSP (454 aa). Residues 24–138 are disordered; the sequence is GLAEEAEASP…PSKAPPKERK (115 aa). Residues 41–54 are compositionally biased toward low complexity; the sequence is PTETESSAGTTGAT. Over residues 66–76 the composition is skewed to polar residues; sequence EDSTPGATTPV. N111 carries an N-linked (GlcNAc...) asparagine; by host glycan. C142 and C159 form a disulfide bridge. The Ig-like V-type domain maps to 155 to 227; sequence LYVHCGVADN…LGDNYIFPSP (73 aa). Residues N164 and N208 are each glycosylated (N-linked (GlcNAc...) asparagine; by host). 3 disulfide bridges follow: C290–C351, C390–C447, and C394–C421. In terms of domain architecture, Ig-like C2-type spans 386-451; it reads GEAVCEARCV…PVDYTCTATG (66 aa). Residues 476 to 496 form a helical membrane-spanning segment; the sequence is VLVSVVAVACGLGAVGLLLVA. Topologically, residues 497–521 are cytoplasmic; sequence ASCLRRKARVIQPGLTRARALGSAP.

It belongs to the herpesviridae glycoprotein C family. As to quaternary structure, interacts with host complement component C3; this interaction inhibits host immune response by disregulating complement cascade.

It localises to the virion membrane. In terms of biological role, essential for the initial attachment to heparan sulfate moieties of the host cell surface proteoglycans. Plays also a role in host immune evasion by inhibiting the host complement cascade activation. In Bovine herpesvirus 1.1 (strain Cooper) (BoHV-1), this protein is Envelope glycoprotein C homolog (gC).